The sequence spans 388 residues: Transposase for insertion sequence element IS406 (388 aa).

This sequence belongs to the transposase mutator family.

Functionally, required for the transposition of the insertion element. The protein is Transposase for insertion sequence element IS406 of Burkholderia multivorans (strain ATCC 17616 / 249).